Here is a 295-residue protein sequence, read N- to C-terminus: Protease HtpX (295 aa).

2 helical membrane passes run 4–24 and 42–62; these read ILLF…TLSL and QLLV…LFIS. A Zn(2+)-binding site is contributed by H147. The active site involves E148. H151 provides a ligand contact to Zn(2+). A run of 2 helical transmembrane segments spans residues 158–178 and 199–219; these read VTLA…ARII and ITTI…VMWF. Zn(2+) is bound at residue E224.

Belongs to the peptidase M48B family. Zn(2+) is required as a cofactor.

It localises to the cell inner membrane. The sequence is that of Protease HtpX from Pseudomonas savastanoi pv. phaseolicola (strain 1448A / Race 6) (Pseudomonas syringae pv. phaseolicola (strain 1448A / Race 6)).